The primary structure comprises 326 residues: WD repeat-containing protein slr1409 (326 aa).

6 WD repeats span residues 47 to 77, 88 to 118, 129 to 159, 169 to 199, 210 to 240, and 252 to 282; these read GSDV…TLWT, GQKP…RLWN, PHRA…KIFT, LKSG…HLIN, TGQG…KLWN, and VPTG…RFWQ.

In Synechocystis sp. (strain ATCC 27184 / PCC 6803 / Kazusa), this protein is WD repeat-containing protein slr1409.